Here is a 198-residue protein sequence, read N- to C-terminus: Transcription factor BHLH133 (198 aa).

Residues 114-127 are basic motif; degenerate; sequence SAESSQSYYAKNRR. Positions 114 to 163 constitute a bHLH domain; that stretch reads SAESSQSYYAKNRRQRINERLRILQELIPNGTKVDISTMLEEAIQYVKFL. Residues 128–163 form a helix-loop-helix motif region; the sequence is QRINERLRILQELIPNGTKVDISTMLEEAIQYVKFL.

This sequence belongs to the bHLH protein family.

Its subcellular location is the nucleus. Its function is as follows. Transcription factor that acts as a regulator of iron homeostasis. May act as negative regulator of iron transportation from root to shoot. Does not seem to be involved in the suppression of the induction of iron deficiency responsive genes. The chain is Transcription factor BHLH133 from Oryza sativa subsp. japonica (Rice).